The following is a 144-amino-acid chain: Large ribosomal subunit protein uL15 (144 aa).

The segment at 1-54 (MRLNTLSPAEGSKKAGKRLGRGIGSGLGKTGGRGHKGQNSRSGGGVRRGFEGGQ) is disordered. A compositionally biased stretch (gly residues) spans 21 to 31 (RGIGSGLGKTG).

This sequence belongs to the universal ribosomal protein uL15 family. As to quaternary structure, part of the 50S ribosomal subunit.

Its function is as follows. Binds to the 23S rRNA. This Enterobacter sp. (strain 638) protein is Large ribosomal subunit protein uL15.